The following is a 256-amino-acid chain: MKNASVITVGNEILKGRTVNTNAAFIGNFLTYHGYQVRRGFVVMDDLDEIGWAFRVALEVSDLVVSSGGLGPTFDDMTVEGFAKCIGQDLRIDEDALAMIKKKYGQADLTPQRLKMAKIPPSCRPIENPVGTAPGLICAVGGKKVIILPGVPKEMEALLKAMEKDIIIPDTHYYDDSVIIADVMESAFAPYVDRIMKEFDGIYVKSHPRNVEVKNPELEIEISGFGEDEAALRKKIEDAIARAGEYAVKLGGSVKR.

This sequence belongs to the CinA family.

In Thermoplasma acidophilum (strain ATCC 25905 / DSM 1728 / JCM 9062 / NBRC 15155 / AMRC-C165), this protein is Protein Ta0487.